Here is a 445-residue protein sequence, read N- to C-terminus: RNA-binding protein asd-2 (445 aa).

A disordered region spans residues 22 to 63 (TVIPPPPNDSGHEFIGPSSGPPQVTITPSGVQSGSANGVSTS). A compositionally biased stretch (polar residues) spans 42-63 (PPQVTITPSGVQSGSANGVSTS). The segment at 71 to 128 (EYLSQLLKDKKQLAAFPNVFHHLERLADEEINKVRVVLFQCEFSKESAPLPDAEGDST) is qua1 domain. The KH domain occupies 145 to 171 (NFVGRILGPRGMTAKQLEQETGCKIMV). Residues 230-253 (APEGEDDLKRKQLMELAIINGTYR) form a qua2 domain; involved in RNA binding region.

In terms of assembly, interacts with sup-12; in the presence of RNA, but with weak affinity in the absence of RNA. In terms of tissue distribution, isoform b: Expressed in the hypodermis and pharyngeal muscles. Isoform c: Expressed in body wall muscles and phayngeal muscles.

Its subcellular location is the nucleus. Its function is as follows. RNA-binding protein that binds to the 5'-NACUAAY-N(1,20)-UAAY-3' consensus sequence in pre-mRNA introns to promote alternative splicing. Required for mutually exclusive alternative splicing where it modulates the switch between mutually exclusive exons during pre-mRNA maturation. Involved in muscle-specific gene expression regulating the alternative splicing of genes such as let-2 and unc-60 to ensure that their respective isoforms are expressed in muscle. Promotes the removal of intron 10 from let-2 pre-mRNA to allow for the exclusive expression of the muscle-specific let-2 isoform (as opposed to the non-muscle-specific isoform expressed in embryos) in body wall muscles during late larval and adult stages of development. Binds cooperatively with RNA-binding protein sup-12 to intron 1A of the unc-60 pre-mRNA to promote alternative splicing and expression of the muscle specific isoform of unc-60. This chain is RNA-binding protein asd-2, found in Caenorhabditis elegans.